A 255-amino-acid chain; its full sequence is Hydroxyacylglutathione hydrolase (255 aa).

The Zn(2+) site is built by histidine 56, histidine 58, aspartate 60, histidine 61, histidine 114, aspartate 133, and histidine 171.

This sequence belongs to the metallo-beta-lactamase superfamily. Glyoxalase II family. Monomer. Zn(2+) is required as a cofactor.

It catalyses the reaction an S-(2-hydroxyacyl)glutathione + H2O = a 2-hydroxy carboxylate + glutathione + H(+). It participates in secondary metabolite metabolism; methylglyoxal degradation; (R)-lactate from methylglyoxal: step 2/2. Functionally, thiolesterase that catalyzes the hydrolysis of S-D-lactoyl-glutathione to form glutathione and D-lactic acid. This chain is Hydroxyacylglutathione hydrolase, found in Rhodopseudomonas palustris (strain ATCC BAA-98 / CGA009).